A 239-amino-acid chain; its full sequence is Protein-S-isoprenylcysteine O-methyltransferase (239 aa).

Residues 1–23 (MHQDFQEDEHEYPDIRRNPLHEV) are Cytoplasmic-facing. A helical transmembrane segment spans residues 24-44 (TMTSYILGILLGIFVGLFPQI). The Lumenal portion of the chain corresponds to 45–47 (RFK). Residues 48-68 (NFNLFIIALSLFHFLEYYITA) form a helical membrane-spanning segment. Over 69 to 88 (KYNPLKVHSESFLLNNGKSY) the chain is Cytoplasmic. A helical membrane pass occupies residues 89–109 (MAAHSFAILECLVESFLFPDL). Residue Lys110 is a topological domain, lumenal. The chain crosses the membrane as a helical span at residues 111 to 131 (IFSYSLATKLCTVLGCLLVIL). Residues 132-175 (GQYTRTIAMHTAGHSFSHIVKTKKESDHVLVKTGVYSWSRHPSY) are Cytoplasmic-facing. S-adenosyl-L-methionine contacts are provided by residues 159–162 (HVLV), Tyr167, and 172–175 (HPSY). An intramembrane region (helical) is located at residues 176–206 (LGFFWWAIGTQLLLLNPLSLVIFIFVLWKFF). At 207-239 (SDRIRVEEKYLIEFFSAEYIEYKNKVGVGIPFI) the chain is on the cytoplasmic side. Arg209 provides a ligand contact to substrate. Glu213 lines the S-adenosyl-L-methionine pocket.

This sequence belongs to the class VI-like SAM-binding methyltransferase superfamily. Isoprenylcysteine carboxyl methyltransferase family.

It is found in the endoplasmic reticulum membrane. It carries out the reaction [protein]-C-terminal S-[(2E,6E)-farnesyl]-L-cysteine + S-adenosyl-L-methionine = [protein]-C-terminal S-[(2E,6E)-farnesyl]-L-cysteine methyl ester + S-adenosyl-L-homocysteine. Mediates C-terminal methylation of the isoprenylated C-terminal cysteine in A-factor mating pheromone and Ras proteins. Does not have a preference for the farnesyl or geranylgeranyl moieties in the model substrates N-acetyl-S-farnesyl-L-cysteine (AFC) and N-acetyl-S-geranylgeranyl-L-cysteine (AGGC) in vitro. The chain is Protein-S-isoprenylcysteine O-methyltransferase (STE14) from Saccharomyces cerevisiae (strain ATCC 204508 / S288c) (Baker's yeast).